We begin with the raw amino-acid sequence, 506 residues long: ATP synthase subunit alpha (506 aa).

170–177 provides a ligand contact to ATP; sequence GDRQTGKT.

It belongs to the ATPase alpha/beta chains family. F-type ATPases have 2 components, CF(1) - the catalytic core - and CF(0) - the membrane proton channel. CF(1) has five subunits: alpha(3), beta(3), gamma(1), delta(1), epsilon(1). CF(0) has four main subunits: a(1), b(1), b'(1) and c(9-12).

Its subcellular location is the cellular thylakoid membrane. The enzyme catalyses ATP + H2O + 4 H(+)(in) = ADP + phosphate + 5 H(+)(out). Produces ATP from ADP in the presence of a proton gradient across the membrane. The alpha chain is a regulatory subunit. The chain is ATP synthase subunit alpha from Synechococcus sp. (strain JA-2-3B'a(2-13)) (Cyanobacteria bacterium Yellowstone B-Prime).